Consider the following 86-residue polypeptide: Small ribosomal subunit protein bS20 (86 aa).

Over residues 1 to 11 (MANIKSQKKRV) the composition is skewed to basic residues. Residues 1–20 (MANIKSQKKRVRTNEKAHQR) form a disordered region.

The protein belongs to the bacterial ribosomal protein bS20 family.

In terms of biological role, binds directly to 16S ribosomal RNA. This Bifidobacterium animalis subsp. lactis (strain AD011) protein is Small ribosomal subunit protein bS20.